The following is a 93-amino-acid chain: Stromal cell-derived factor 1 (93 aa).

An N-terminal signal peptide occupies residues 1–21 (MDAKVVAVLALVLAALCLSDG). The Receptor activation motif signature appears at 22-23 (KP). The receptor and heparin binding stretch occupies residues 29-33 (RCPCR). 2 cysteine pairs are disulfide-bonded: cysteine 30/cysteine 55 and cysteine 32/cysteine 71. 3 receptor binding regions span residues 39–41 (VAR), 48–50 (KIL), and 60–70 (VARLKNNNRQV). Heparin is bound by residues 41–51 (RANVKHLKILN), arginine 62, glutamine 69, and lysine 85.

The protein belongs to the intercrine alpha (chemokine CxC) family. In terms of assembly, monomer or homodimer; in equilibrium. Dimer formation is induced by non acidic pH and the presence of multivalent anions, and by binding to CXCR4 or heparin. Monomeric form is required for full chemotactic activity and resistance to ischemia/reperfusion injury, whereas the dimeric form acts as a partial agonist of CXCR4, stimulating Ca2+ mobilization but with no chemotactic activity and instead acts as a selective antagonist that blocks chemotaxis induced by the monomeric form. Interacts with the N-terminus of ACKR3. Interacts with integrin subunit ITGB3 (via the allosteric site (site 2)). Interacts with TNFAIP6 (via Link domain).

It is found in the secreted. In terms of biological role, chemoattractant active on T-lymphocytes and monocytes but not neutrophils. Activates the C-X-C chemokine receptor CXCR4 to induce a rapid and transient rise in the level of intracellular calcium ions and chemotaxis. Also binds to atypical chemokine receptor ACKR3, which activates the beta-arrestin pathway and acts as a scavenger receptor for SDF-1. Acts as a positive regulator of monocyte migration and a negative regulator of monocyte adhesion via the LYN kinase. Binds to the allosteric site (site 2) of integrins and activates integrins ITGAV:ITGB3, ITGA4:ITGB1 and ITGA5:ITGB1 in a CXCR4-independent manner. Stimulates migration of monocytes and T-lymphocytes through its receptors, CXCR4 and ACKR3, and decreases monocyte adherence to surfaces coated with ICAM-1, a ligand for beta-2 integrins. SDF1A/CXCR4 signaling axis inhibits beta-2 integrin LFA-1 mediated adhesion of monocytes to ICAM-1 through LYN kinase. Plays a protective role after myocardial infarction. Has several critical functions during embryonic development; required for B-cell lymphopoiesis, myelopoiesis in bone marrow and heart ventricular septum formation. Stimulates the proliferation of bone marrow-derived B-cell progenitors in the presence of IL7 as well as growth of stromal cell-dependent pre-B-cells. The protein is Stromal cell-derived factor 1 (CXCL12) of Felis catus (Cat).